Here is a 498-residue protein sequence, read N- to C-terminus: ATP synthase subunit beta, chloroplastic (498 aa).

172–179 (GGAGVGKT) lines the ATP pocket.

Belongs to the ATPase alpha/beta chains family. As to quaternary structure, F-type ATPases have 2 components, CF(1) - the catalytic core - and CF(0) - the membrane proton channel. CF(1) has five subunits: alpha(3), beta(3), gamma(1), delta(1), epsilon(1). CF(0) has four main subunits: a(1), b(1), b'(1) and c(9-12).

The protein resides in the plastid. The protein localises to the chloroplast thylakoid membrane. It carries out the reaction ATP + H2O + 4 H(+)(in) = ADP + phosphate + 5 H(+)(out). Functionally, produces ATP from ADP in the presence of a proton gradient across the membrane. The catalytic sites are hosted primarily by the beta subunits. The polypeptide is ATP synthase subunit beta, chloroplastic (Atropa belladonna (Belladonna)).